A 905-amino-acid chain; its full sequence is Sun domain-containing protein 1 (905 aa).

Disordered stretches follow at residues 1–21, 41–166, and 207–242; these read MSGD…LPLQ, NNTV…ILKQ, and QQQQ…IDNN. Topologically, residues 1-290 are nuclear; the sequence is MSGDYKPNYQ…NNNNKVNFKQ (290 aa). Composition is skewed to low complexity over residues 41–67 and 75–101; these read NNTV…SSYL and SNQI…ASSS. Residues 107–116 are compositionally biased toward basic and acidic residues; sequence KVDHNSHNNN. Acidic residues predominate over residues 117-126; that stretch reads DDDDIEDDVD. The segment covering 129-146 has biased composition (polar residues); it reads YSTNNASSNILHNRFSNS. Residues 170 to 221 are a coiled coil; that stretch reads LYNHLNNQIQQQQQQQQQQQQQQQQQQQQQQQQQQQQQQQQQQQRNNNNNSN. Over residues 207–227 the composition is skewed to low complexity; sequence QQQQQQQRNNNNNSNSSNNNN. Residues 291 to 311 form a helical membrane-spanning segment; it reads AIWIFIFSVLFIGCLLGLFST. At 312 to 905 the chain is on the perinuclear space side; sequence NFYGIHIYFP…IEKQQQSDEL (594 aa). Coiled-coil stretches lie at residues 359-456 and 504-609; these read KKNE…QLIQ and REFN…TQQF. Residues 662 to 860 form the SUN domain; it reads GASIEYNALH…YRFRVHGYQI (199 aa). A coiled-coil region spans residues 864–901; sequence EQEQIQIIQEEQSFKQEEINQQQIEQIEQIEQIEKQQQ.

As to quaternary structure, homodimer and homooligomer.

It is found in the nucleus membrane. In terms of biological role, may have an important role in defining the spacing of the nuclear envelope lumen. Essential for centrosome attachment to the nucleus, maintenance of correct ploidy, proper mitosis, association of the centromere cluster with the centrosome and the maintenance of genome stability. Requires direct chromatin binding for inner nuclear membrane targeting. In Dictyostelium discoideum (Social amoeba), this protein is Sun domain-containing protein 1 (sun1).